Consider the following 531-residue polypeptide: Apolipoprotein N-acyltransferase (531 aa).

A run of 7 helical transmembrane segments spans residues 8 to 28 (IILL…LLAM), 34 to 54 (FGIF…IDGV), 74 to 94 (WSFG…AFLV), 105 to 125 (LAVV…VLVA), 128 to 148 (LWSD…VAEW), 178 to 198 (VLNV…PALI), and 206 to 226 (VGLA…YYRL). A CN hydrolase domain is found at 243-493 (VQPVIDQAKK…KGVTDAILPG (251 aa)). E287 serves as the catalytic Proton acceptor. K351 is an active-site residue. Catalysis depends on C405, which acts as the Nucleophile. A helical membrane pass occupies residues 501–521 (SMLRGRIFWFTGVFLLLVAAI).

Belongs to the CN hydrolase family. Apolipoprotein N-acyltransferase subfamily.

The protein resides in the cell inner membrane. The catalysed reaction is N-terminal S-1,2-diacyl-sn-glyceryl-L-cysteinyl-[lipoprotein] + a glycerophospholipid = N-acyl-S-1,2-diacyl-sn-glyceryl-L-cysteinyl-[lipoprotein] + a 2-acyl-sn-glycero-3-phospholipid + H(+). It functions in the pathway protein modification; lipoprotein biosynthesis (N-acyl transfer). Its function is as follows. Catalyzes the phospholipid dependent N-acylation of the N-terminal cysteine of apolipoprotein, the last step in lipoprotein maturation. This Sinorhizobium fredii (strain NBRC 101917 / NGR234) protein is Apolipoprotein N-acyltransferase.